The primary structure comprises 223 residues: Thiamine-phosphate synthase (223 aa).

Residues 45–49 and N77 each bind 4-amino-2-methyl-5-(diphosphooxymethyl)pyrimidine; that span reads QYREK. Mg(2+)-binding residues include D78 and D97. T116 is a binding site for 4-amino-2-methyl-5-(diphosphooxymethyl)pyrimidine. A 2-[(2R,5Z)-2-carboxy-4-methylthiazol-5(2H)-ylidene]ethyl phosphate-binding site is contributed by 142-144; that stretch reads SYT. Position 145 (K145) interacts with 4-amino-2-methyl-5-(diphosphooxymethyl)pyrimidine. Residues G173 and 193–194 each bind 2-[(2R,5Z)-2-carboxy-4-methylthiazol-5(2H)-ylidene]ethyl phosphate; that span reads VT.

The protein belongs to the thiamine-phosphate synthase family. Mg(2+) serves as cofactor.

The catalysed reaction is 2-[(2R,5Z)-2-carboxy-4-methylthiazol-5(2H)-ylidene]ethyl phosphate + 4-amino-2-methyl-5-(diphosphooxymethyl)pyrimidine + 2 H(+) = thiamine phosphate + CO2 + diphosphate. The enzyme catalyses 2-(2-carboxy-4-methylthiazol-5-yl)ethyl phosphate + 4-amino-2-methyl-5-(diphosphooxymethyl)pyrimidine + 2 H(+) = thiamine phosphate + CO2 + diphosphate. It carries out the reaction 4-methyl-5-(2-phosphooxyethyl)-thiazole + 4-amino-2-methyl-5-(diphosphooxymethyl)pyrimidine + H(+) = thiamine phosphate + diphosphate. It participates in cofactor biosynthesis; thiamine diphosphate biosynthesis; thiamine phosphate from 4-amino-2-methyl-5-diphosphomethylpyrimidine and 4-methyl-5-(2-phosphoethyl)-thiazole: step 1/1. Functionally, condenses 4-methyl-5-(beta-hydroxyethyl)thiazole monophosphate (THZ-P) and 2-methyl-4-amino-5-hydroxymethyl pyrimidine pyrophosphate (HMP-PP) to form thiamine monophosphate (TMP). This Dictyoglomus thermophilum (strain ATCC 35947 / DSM 3960 / H-6-12) protein is Thiamine-phosphate synthase.